A 384-amino-acid chain; its full sequence is Dual-specificity RNA methyltransferase RlmN (384 aa).

Glutamate 105 serves as the catalytic Proton acceptor. The 240-residue stretch at 111 to 350 folds into the Radical SAM core domain; the sequence is EDDRATLCVS…TIVRKTRGDD (240 aa). Cysteine 118 and cysteine 355 form a disulfide bridge. [4Fe-4S] cluster is bound by residues cysteine 125, cysteine 129, and cysteine 132. Residues 179–180, serine 211, 233–235, and asparagine 312 contribute to the S-adenosyl-L-methionine site; these read GE and SLH. Cysteine 355 acts as the S-methylcysteine intermediate in catalysis.

It belongs to the radical SAM superfamily. RlmN family. It depends on [4Fe-4S] cluster as a cofactor.

It localises to the cytoplasm. The enzyme catalyses adenosine(2503) in 23S rRNA + 2 reduced [2Fe-2S]-[ferredoxin] + 2 S-adenosyl-L-methionine = 2-methyladenosine(2503) in 23S rRNA + 5'-deoxyadenosine + L-methionine + 2 oxidized [2Fe-2S]-[ferredoxin] + S-adenosyl-L-homocysteine. It catalyses the reaction adenosine(37) in tRNA + 2 reduced [2Fe-2S]-[ferredoxin] + 2 S-adenosyl-L-methionine = 2-methyladenosine(37) in tRNA + 5'-deoxyadenosine + L-methionine + 2 oxidized [2Fe-2S]-[ferredoxin] + S-adenosyl-L-homocysteine. In terms of biological role, specifically methylates position 2 of adenine 2503 in 23S rRNA and position 2 of adenine 37 in tRNAs. m2A2503 modification seems to play a crucial role in the proofreading step occurring at the peptidyl transferase center and thus would serve to optimize ribosomal fidelity. The sequence is that of Dual-specificity RNA methyltransferase RlmN from Escherichia coli O6:H1 (strain CFT073 / ATCC 700928 / UPEC).